Reading from the N-terminus, the 219-residue chain is Cytidylate kinase (219 aa).

Position 21–29 (21–29 (GPAASGKGT)) interacts with ATP.

This sequence belongs to the cytidylate kinase family. Type 1 subfamily.

The protein localises to the cytoplasm. The catalysed reaction is CMP + ATP = CDP + ADP. The enzyme catalyses dCMP + ATP = dCDP + ADP. In Rickettsia prowazekii (strain Madrid E), this protein is Cytidylate kinase.